We begin with the raw amino-acid sequence, 309 residues long: Large ribosomal subunit protein mL45 (309 aa).

It belongs to the mitochondrion-specific ribosomal protein mL45 family. As to quaternary structure, component of the mitochondrial ribosome large subunit (39S) which comprises a 16S rRNA and about 50 distinct proteins.

It localises to the mitochondrion. Its function is as follows. Component of the mitochondrial large ribosomal subunit (mt-LSU). Within the mitochondrial ribosomes, required to direct the nascent polypeptide toward the tunnel exit and position the exit at a distance from the membrane surface. The chain is Large ribosomal subunit protein mL45 (mrpl45) from Xenopus laevis (African clawed frog).